The following is a 974-amino-acid chain: Collagen alpha-1(I) chain (974 aa).

The span at 1 to 14 (GISVPGPMGPSGPR) shows a compositional bias: low complexity. The tract at residues 1 to 974 (GISVPGPMGP…PGPPGPPGPP (974 aa)) is disordered. 4-hydroxyproline occurs at positions 17, 20, 23, 32, 35, 38, 53, 68, 75, and 81. The segment covering 25–44 (PQGFQGPPGEPGEPGASGPM) has biased composition (low complexity). The span at 56 to 73 (NGDDGEAGKPGRPGERRG) shows a compositional bias: basic and acidic residues. Lys84 bears the 5-hydroxylysine; alternate mark. Residue Lys84 is glycosylated (O-linked (Gal...) hydroxylysine; alternate). Position 90 is a phosphoserine (Ser90). Positions 98-114 (DAGPAGPKGEPGSPGEN) are enriched in low complexity. Pro108, Pro111, Pro117, Pro126, Pro132, Pro153, Pro162, Pro165, Pro192, Pro195, Pro207, Pro213, Pro222, Pro228, Pro231, and Pro245 each carry 4-hydroxyproline. Residues 132–150 (PGASGPAGARGNDGATGAA) show a composition bias toward low complexity. Residues 152–164 (PPGPTGPAGPPGF) show a composition bias toward pro residues. Positions 198 to 228 (AGAAGPAGNPGADGQPGAKGANGAPGIAGAP) are enriched in low complexity. Lys248 is modified (5-hydroxylysine). 4-hydroxyproline occurs at positions 254, 257, 269, 278, 293, 299, 308, and 314. The segment covering 303-312 (GERGGPGSRG) has biased composition (gly residues). Lys323 is modified (5-hydroxylysine). Pro328, Pro337, Pro343, Pro349, Pro358, Pro361, Pro370, Pro379, Pro385, Pro397, Pro406, Pro415, Pro418, Pro436, Pro454, Pro460, Pro466, Pro472, Pro484, Pro493, Pro505, Pro520, Pro527, and Pro536 each carry 4-hydroxyproline. Low complexity predominate over residues 352–378 (KGLTGSPGSPGPDGKTGPPGPAGQDGR). The segment covering 387–406 (ARGQAGVMGFPGPKGAAGEP) has biased composition (low complexity). Positions 504-517 (APGNDGAKGDAGAP) are enriched in low complexity. Lys548 is subject to 5-hydroxylysine. 4-hydroxyproline occurs at positions 554, 569, and 575. The span at 581–595 (SGPSGPAGPTGARGA) shows a compositional bias: low complexity. The residue at position 584 (Ser584) is a Phosphoserine. 4-hydroxyproline occurs at positions 596, 602, 605, 614, 620, 638, 647, and 656. The span at 608–635 (AGFAGPPGADGQPGAKGEPGDAGAKGDA) shows a compositional bias: low complexity. Over residues 637-649 (PPGPAGPTGPPGP) the composition is skewed to pro residues. Lys659 bears the 5-hydroxylysine mark. The segment covering 664 to 680 (SAGPPGATGFPGAAGRV) has biased composition (low complexity). 4-hydroxyproline occurs at positions 668 and 674. Residue Pro682 is modified to 3-hydroxyproline. 4-hydroxyproline occurs at positions 683, 692, 695, 716, 725, 733, 742, 760, 769, 772, 778, 793, 799, 805, 814, and 820. Positions 709–718 (ETGPAGRPGE) are enriched in low complexity. A compositionally biased stretch (low complexity) spans 730–742 (KGSPGADGPAGAP). Residues 792 to 802 (PPGPVGPPGLA) show a composition bias toward pro residues. Residues 804–826 (PPGESGREGSPGAEGSPGRDGSP) show a composition bias toward low complexity. Over residues 828-844 (PKGPPGAPGAPGAPGPV) the composition is skewed to pro residues. 5-hydroxylysine is present on Lys829. Pro832, Pro835, and Pro838 each carry 4-hydroxyproline. The span at 865–879 (AGPAGARGPAGPQGP) shows a compositional bias: low complexity. A compositionally biased stretch (basic and acidic residues) spans 880-894 (RGDKGETGEQGDRRG). Lys883 is modified (5-hydroxylysine). Pro905, Pro908, Pro926, and Pro941 each carry 4-hydroxyproline. The segment covering 908 to 941 (PGEQGPSGASGPAGPRGPPGSAGSPGKDGLNGLP) has biased composition (low complexity). Position 946 is a 3-hydroxyproline (Pro946). The residue at position 947 (Pro947) is a 4-hydroxyproline. Pro residues predominate over residues 959–974 (VGPPGPPGPPGPPGPP). Position 961 is a 3-hydroxyproline (Pro961). Pro962 is modified (4-hydroxyproline). Position 964 is a 3-hydroxyproline (Pro964). Pro965 carries the 4-hydroxyproline modification. Residue Pro967 is modified to 3-hydroxyproline. A 4-hydroxyproline mark is found at Pro968, Pro971, and Pro974.

The protein belongs to the fibrillar collagen family. Trimers of one alpha 2(I) and two alpha 1(I) chains. Post-translationally, contains mostly 4-hydroxyproline. Proline residues at the third position of the tripeptide repeating unit (G-X-Y) are hydroxylated in some or all of the chains. Contains 3-hydroxyproline at a few sites. This modification occurs on the first proline residue in the sequence motif Gly-Pro-Hyp, where Hyp is 4-hydroxyproline. In terms of processing, lysine residues at the third position of the tripeptide repeating unit (G-X-Y) are 5-hydroxylated in some or all of the chains. Post-translationally, O-glycosylated on hydroxylated lysine residues. The O-linked glycan consists of a Glc-Gal disaccharide. Expressed in bones.

The protein localises to the secreted. It localises to the extracellular space. It is found in the extracellular matrix. Type I collagen is a member of group I collagen (fibrillar forming collagen). This is Collagen alpha-1(I) chain from Scelidodon sp. (strain SLP-2019) (South American ground sloth).